A 2618-amino-acid chain; its full sequence is Mediator of RNA polymerase II transcription subunit 13 (2618 aa).

Low complexity-rich tracts occupy residues 232–255, 509–519, and 532–543; these read FAAASSPPGSNGSAASAGGAVPNP, TPASGTGSLSA, and DSKQLVQQQIQQ. 10 disordered regions span residues 232-279, 509-543, 569-731, 916-957, 970-995, 1036-1055, 1268-1384, 1521-1557, 1614-1633, and 1985-2060; these read FAAA…AAPP, TPASGTGSLSADGDENEQNKPPQDSKQLVQQQIQQ, GNTP…SGGP, LNIK…AEGL, TSSNDECSSVQIHTPPDSNNPSNGGC, TKMFPTPPSHEQQHPNSSPC, PRTP…TGVV, ASASMPGAGSGHGHGPNGGSNSSSCTPPSSNPHITGY, SRKNQNKQGPGETSSALDKI, and KTLL…GETK. A phosphothreonine mark is found at Thr571 and Thr575. Composition is skewed to polar residues over residues 581–590, 634–643, and 669–681; these read STYSRNSLGG, APTSVSNLQQ, and SITASPYVHQTPS. Residues 692-706 are compositionally biased toward gly residues; the sequence is AGGGPAGGQGLGTGP. Residues 711–723 show a composition bias toward low complexity; it reads AQQPATPTAATSA. Residues 939–949 are compositionally biased toward gly residues; sequence NSSGGGSGSGG. Over residues 1272-1295 the composition is skewed to polar residues; it reads LTPSTVPQPLSSGGSQYLLNQLNC. Gly residues-rich tracts occupy residues 1375–1384 and 1528–1538; these read GLGGGATGVV and AGSGHGHGPNG. Low complexity predominate over residues 1539–1553; it reads GSNSSSCTPPSSNPH. Over residues 1614–1629 the composition is skewed to polar residues; it reads SRKNQNKQGPGETSSA. Over residues 1993-2014 the composition is skewed to low complexity; it reads GSGNSHSKGGSSCSSNSSSVSG. Phosphoserine occurs at positions 2472 and 2475.

The protein belongs to the Mediator complex subunit 13 family. As to quaternary structure, component of the Cdk8 module of the Mediator complex, composed of CycC, Cdk8, kto and skd.

The protein resides in the nucleus. Functionally, component of the Mediator complex, a coactivator involved in the regulated transcription of nearly all RNA polymerase II-dependent genes. Mediator functions as a bridge to convey information from gene-specific regulatory proteins to the basal RNA polymerase II transcription machinery. Mediator is recruited to promoters by direct interactions with regulatory proteins and serves as a scaffold for the assembly of a functional preinitiation complex with RNA polymerase II and the general transcription factors. Required for leg and eye development and macrochaete specification or differentiation. Negatively regulates sex comb development. Required for activated transcription of the MtnB and MtnD genes. In Drosophila melanogaster (Fruit fly), this protein is Mediator of RNA polymerase II transcription subunit 13 (skd).